The sequence spans 1116 residues: cGMP-specific 3',5'-cyclic phosphodiesterase (1116 aa).

Disordered regions lie at residues 1-36 (MTDVSATTGRAGDRVSSTSSEVAVETTSQALTNGAA) and 82-136 (KSEC…ATQQ). A compositionally biased stretch (low complexity) spans 15 to 28 (VSSTSSEVAVETTS). Over residues 86–136 (HSQSNNNQHVETAPSKQSSDSEASAPTTVSIPSANAKINSSSSGKTTATQQ) the composition is skewed to polar residues. GAF domains follow at residues 241–393 (DIDV…GIGI) and 425–611 (NLEC…GLGI). Positions 641 to 964 (SQDQTEKLAQ…RNWQDLAEKV (324 aa)) constitute a PDEase domain. Histidine 717 (proton donor) is an active-site residue. Residues histidine 721, histidine 757, aspartate 758, and aspartate 868 each coordinate a divalent metal cation. Disordered stretches follow at residues 1005–1031 (QHGGSAGGGEDTHTPEHQRSSSRLSIK) and 1067–1116 (HVSE…CALL). Basic and acidic residues-rich tracts occupy residues 1014–1023 (EDTHTPEHQR) and 1067–1076 (HVSEDMDDKS). The segment covering 1085 to 1103 (SGSVGRMSASSSTSSAGTV) has biased composition (low complexity). Over residues 1106–1116 (SKKRSKLCALL) the composition is skewed to basic residues. A Cysteine methyl ester modification is found at cysteine 1113. Residue cysteine 1113 is the site of S-farnesyl cysteine attachment. Positions 1114–1116 (ALL) are cleaved as a propeptide — removed in mature form.

The protein belongs to the cyclic nucleotide phosphodiesterase family. In terms of assembly, interacts with PrBP. A divalent metal cation is required as a cofactor.

Its subcellular location is the cell membrane. The catalysed reaction is 3',5'-cyclic GMP + H2O = GMP + H(+). Functionally, has a role regulating cGMP transport in Malpighian tubule principal cells. The protein is cGMP-specific 3',5'-cyclic phosphodiesterase of Drosophila mojavensis (Fruit fly).